Consider the following 421-residue polypeptide: CinA-like protein (421 aa).

It belongs to the CinA family.

This is CinA-like protein from Mycobacterium sp. (strain JLS).